Here is a 661-residue protein sequence, read N- to C-terminus: UvrABC system protein B (661 aa).

One can recognise a Helicase ATP-binding domain in the interval 25–182 (AGLSSKKRSQ…NDLINLQYER (158 aa)). 38-45 (GITGSGKT) contributes to the ATP binding site. The short motif at 91–114 (YYDYYQPEAYIARTDTFIEKDSSI) is the Beta-hairpin element. Residues 430–592 (QVEDLISEIQ…IIPKTINRAI (163 aa)) enclose the Helicase C-terminal domain. A UVR domain is found at 621-656 (KTHIDKLKKEMLKAASNLEFEQAVKLRDQLKTLEAA).

It belongs to the UvrB family. As to quaternary structure, forms a heterotetramer with UvrA during the search for lesions. Interacts with UvrC in an incision complex.

It localises to the cytoplasm. Functionally, the UvrABC repair system catalyzes the recognition and processing of DNA lesions. A damage recognition complex composed of 2 UvrA and 2 UvrB subunits scans DNA for abnormalities. Upon binding of the UvrA(2)B(2) complex to a putative damaged site, the DNA wraps around one UvrB monomer. DNA wrap is dependent on ATP binding by UvrB and probably causes local melting of the DNA helix, facilitating insertion of UvrB beta-hairpin between the DNA strands. Then UvrB probes one DNA strand for the presence of a lesion. If a lesion is found the UvrA subunits dissociate and the UvrB-DNA preincision complex is formed. This complex is subsequently bound by UvrC and the second UvrB is released. If no lesion is found, the DNA wraps around the other UvrB subunit that will check the other stand for damage. This Rickettsia peacockii (strain Rustic) protein is UvrABC system protein B.